The primary structure comprises 709 residues: ATP-dependent zinc metalloprotease YME1 homolog (709 aa).

Positions 152–182 (FTSDTSSTVSSTPSLNHSLQNSMPPSTPTPP) are disordered. Residues 153 to 165 (TSDTSSTVSSTPS) show a composition bias toward low complexity. The chain crosses the membrane as a helical span at residues 217 to 239 (IFKFIAGLSVASYFVLLGMSIFA). An ATP-binding site is contributed by 307-314 (GPPGTGKT). Histidine 530 provides a ligand contact to Zn(2+). Residue glutamate 531 is part of the active site. The Zn(2+) site is built by histidine 534 and aspartate 608.

This sequence in the N-terminal section; belongs to the AAA ATPase family. In the C-terminal section; belongs to the peptidase M41 family. It depends on Zn(2+) as a cofactor.

The protein resides in the mitochondrion membrane. Its function is as follows. Putative ATP-dependent protease. The protein is ATP-dependent zinc metalloprotease YME1 homolog of Schizosaccharomyces pombe (strain 972 / ATCC 24843) (Fission yeast).